The following is a 453-amino-acid chain: MKFSAVILAAGKGTRMYSNMPKVLHTLAGKPMAKHVIDTCTGLGAQNIHLVYGHGGDQMQQTLAEEPVNWVLQAEQLGTGHAVDQASPKFEDDEKVLVLYGDVPLISAETIENLLDAQPTGGIALLTVMLDNPMGYGRIIRKNGPVVAIVEQKEATEEQKLIKECNTGVLVATGGDLKRWLAGLNNENAQGEYYLTDVIAAAHDEGRAVEAVHPVNAIEVEGVNDRAQLARLERAFQSMQAQKLLEQGVMLRDPARFDLRGELQCGMDCEIDANVVIEGKVSLGDNVVIGAGCVLKDCEIDDNTVVRPYSVIEGATVGEECTVGPFTRLRPGAEMRNDSHVGNFVEVKNACIGEGSKANHLTYLGDAEIGQRTNIGAGTITCNYDGANKFKTVIGNDVFVGSDSQLVAPVTIADGATIGAGTTLTKDVAEGELVITRVKERKITGWQRPVKQK.

The pyrophosphorylase stretch occupies residues 1–226 (MKFSAVILAA…AIEVEGVNDR (226 aa)). Residues 8-11 (LAAG), K22, Q73, 78-79 (GT), 100-102 (YGD), G137, E151, N166, and N224 each bind UDP-N-acetyl-alpha-D-glucosamine. D102 is a Mg(2+) binding site. Residue N224 participates in Mg(2+) binding. A linker region spans residues 227–247 (AQLARLERAFQSMQAQKLLEQ). Residues 248–453 (GVMLRDPARF…TGWQRPVKQK (206 aa)) form an N-acetyltransferase region. 2 residues coordinate UDP-N-acetyl-alpha-D-glucosamine: R330 and K348. The active-site Proton acceptor is the H360. Residues Y363 and N374 each contribute to the UDP-N-acetyl-alpha-D-glucosamine site. Residues A377, 383-384 (NY), S402, A420, and R437 contribute to the acetyl-CoA site.

In the N-terminal section; belongs to the N-acetylglucosamine-1-phosphate uridyltransferase family. This sequence in the C-terminal section; belongs to the transferase hexapeptide repeat family. As to quaternary structure, homotrimer. The cofactor is Mg(2+).

It localises to the cytoplasm. It carries out the reaction alpha-D-glucosamine 1-phosphate + acetyl-CoA = N-acetyl-alpha-D-glucosamine 1-phosphate + CoA + H(+). It catalyses the reaction N-acetyl-alpha-D-glucosamine 1-phosphate + UTP + H(+) = UDP-N-acetyl-alpha-D-glucosamine + diphosphate. Its pathway is nucleotide-sugar biosynthesis; UDP-N-acetyl-alpha-D-glucosamine biosynthesis; N-acetyl-alpha-D-glucosamine 1-phosphate from alpha-D-glucosamine 6-phosphate (route II): step 2/2. It functions in the pathway nucleotide-sugar biosynthesis; UDP-N-acetyl-alpha-D-glucosamine biosynthesis; UDP-N-acetyl-alpha-D-glucosamine from N-acetyl-alpha-D-glucosamine 1-phosphate: step 1/1. It participates in bacterial outer membrane biogenesis; LPS lipid A biosynthesis. Its function is as follows. Catalyzes the last two sequential reactions in the de novo biosynthetic pathway for UDP-N-acetylglucosamine (UDP-GlcNAc). The C-terminal domain catalyzes the transfer of acetyl group from acetyl coenzyme A to glucosamine-1-phosphate (GlcN-1-P) to produce N-acetylglucosamine-1-phosphate (GlcNAc-1-P), which is converted into UDP-GlcNAc by the transfer of uridine 5-monophosphate (from uridine 5-triphosphate), a reaction catalyzed by the N-terminal domain. The sequence is that of Bifunctional protein GlmU from Vibrio campbellii (strain ATCC BAA-1116).